A 98-amino-acid chain; its full sequence is MSMVYINIFLAFILSLMGMLVYRSHLMSSLLCLEGMMLSLFVMMSVTILNNHLTLASMMPIVLLVFAACEAALGLSLLVMVSNTYGTDHVQNLNLLQC.

Helical transmembrane passes span 1 to 21, 29 to 49, and 61 to 81; these read MSMV…GMLV, SLLC…VTIL, and IVLL…LVMV.

This sequence belongs to the complex I subunit 4L family. In terms of assembly, core subunit of respiratory chain NADH dehydrogenase (Complex I) which is composed of 45 different subunits.

The protein resides in the mitochondrion inner membrane. It carries out the reaction a ubiquinone + NADH + 5 H(+)(in) = a ubiquinol + NAD(+) + 4 H(+)(out). Its function is as follows. Core subunit of the mitochondrial membrane respiratory chain NADH dehydrogenase (Complex I) which catalyzes electron transfer from NADH through the respiratory chain, using ubiquinone as an electron acceptor. Part of the enzyme membrane arm which is embedded in the lipid bilayer and involved in proton translocation. This Vulpes vulpes (Red fox) protein is NADH-ubiquinone oxidoreductase chain 4L (MT-ND4L).